The primary structure comprises 320 residues: Integrin-binding sialoprotein (320 aa).

A signal peptide spans 1-16; that stretch reads MKTALILLCILGMASA. 5 positions are modified to phosphoserine: Ser31, Ser68, Ser76, Ser77, and Ser96. Disordered stretches follow at residues 60 to 117, 136 to 225, and 238 to 264; these read PVQG…VTAS, LPKK…RELT, and FQQT…VEYG. Acidic residues predominate over residues 67–106; it reads SSEENGDGDSSEEEGEEEETSNEEENNEDSEGNEDQEAEA. N-linked (GlcNAc...) asparagine glycosylation occurs at Asn108. The span at 139–152 shows a compositional bias: basic and acidic residues; that stretch reads KAGDAEGKAPKMKE. Phosphoserine is present on Ser153. The segment covering 153–176 has biased composition (acidic residues); it reads SDEEEEEEEEEENENEEAEVDENE. Composition is skewed to polar residues over residues 177 to 188 and 249 to 261; these read QVVNGTSTNSTE and GTTS…SSTV. Residues Asn180 and Asn185 are each glycosylated (N-linked (GlcNAc...) asparagine). Positions 289–291 match the Integrin-binding motif motif; it reads RGD. A sulfotyrosine mark is found at Tyr316 and Tyr317.

As to quaternary structure, monomer. Interacts with integrins; the interaction promotes cell adhesion.

It is found in the secreted. Its function is as follows. Binds tightly to hydroxyapatite. Appears to form an integral part of the mineralized matrix. Probably important to cell-matrix interaction. Promotes adhesion and migration of various cells via the alpha-V/beta-3 integrin receptor (ITGAV:ITGB3). The sequence is that of Integrin-binding sialoprotein (Ibsp) from Rattus norvegicus (Rat).